Here is an 877-residue protein sequence, read N- to C-terminus: Mediator of RNA polymerase II transcription subunit 16 (877 aa).

WD repeat units follow at residues 21–71 (WEKW…EHPW), 72–119 (DLHS…NSWE), 120–165 (SSVG…VKFS), 166–203 (PSLT…LTST), 204–257 (ESLC…RIDT), 258–334 (EILP…DKQP), 335–415 (TILK…RPVD), 416–460 (EPAM…LSPS), and 461–495 (MGHP…LLHV). The interval 848–877 (PAFVQLGPQSTHHSPRTPRSLDHLHPEDRP) is disordered. Over residues 866 to 877 (RSLDHLHPEDRP) the composition is skewed to basic and acidic residues.

Belongs to the Mediator complex subunit 16 family. Component of the Mediator complex, which is composed of MED1, MED4, MED6, MED7, MED8, MED9, MED10, MED11, MED12, MED13, MED13L, MED14, MED15, MED16, MED17, MED18, MED19, MED20, MED21, MED22, MED23, MED24, MED25, MED26, MED27, MED29, MED30, MED31, CCNC, CDK8 and CDC2L6/CDK11. The MED12, MED13, CCNC and CDK8 subunits form a distinct module termed the CDK8 module. Mediator containing the CDK8 module is less active than Mediator lacking this module in supporting transcriptional activation. Individual preparations of the Mediator complex lacking one or more distinct subunits have been variously termed ARC, CRSP, DRIP, PC2, SMCC and TRAP.

Its subcellular location is the nucleus. Component of the Mediator complex, a coactivator involved in the regulated transcription of nearly all RNA polymerase II-dependent genes. Mediator functions as a bridge to convey information from gene-specific regulatory proteins to the basal RNA polymerase II transcription machinery. Mediator is recruited to promoters by direct interactions with regulatory proteins and serves as a scaffold for the assembly of a functional preinitiation complex with RNA polymerase II and the general transcription factors. This is Mediator of RNA polymerase II transcription subunit 16 (MED16) from Homo sapiens (Human).